The sequence spans 302 residues: Glutaminase (302 aa).

Residues Ser-61, Asn-111, Glu-155, Asn-162, Tyr-186, Tyr-238, and Val-256 each contribute to the substrate site.

The protein belongs to the glutaminase family. Homotetramer.

It catalyses the reaction L-glutamine + H2O = L-glutamate + NH4(+). This chain is Glutaminase, found in Pseudomonas aeruginosa (strain ATCC 15692 / DSM 22644 / CIP 104116 / JCM 14847 / LMG 12228 / 1C / PRS 101 / PAO1).